Here is a 192-residue protein sequence, read N- to C-terminus: tRNA (pseudouridine(54)-N(1))-methyltransferase (192 aa).

Positions 127 and 181 each coordinate S-adenosyl-L-methionine.

Belongs to the methyltransferase superfamily. TrmY family. As to quaternary structure, homodimer.

It localises to the cytoplasm. It catalyses the reaction pseudouridine(54) in tRNA + S-adenosyl-L-methionine = N(1)-methylpseudouridine(54) in tRNA + S-adenosyl-L-homocysteine + H(+). Specifically catalyzes the N1-methylation of pseudouridine at position 54 (Psi54) in tRNAs. The chain is tRNA (pseudouridine(54)-N(1))-methyltransferase from Methanocella arvoryzae (strain DSM 22066 / NBRC 105507 / MRE50).